Consider the following 277-residue polypeptide: Formamidopyrimidine-DNA glycosylase (277 aa).

Catalysis depends on proline 2, which acts as the Schiff-base intermediate with DNA. The Proton donor role is filled by glutamate 3. The Proton donor; for beta-elimination activity role is filled by lysine 58. Residues histidine 97, arginine 116, and arginine 158 each coordinate DNA. The FPG-type zinc finger occupies 243-277; sequence NVYGRAGAPCPRCGRSIRQRRIAQRSTWYCPGCQR. The active-site Proton donor; for delta-elimination activity is the arginine 267.

The protein belongs to the FPG family. Monomer. Zn(2+) serves as cofactor.

It catalyses the reaction Hydrolysis of DNA containing ring-opened 7-methylguanine residues, releasing 2,6-diamino-4-hydroxy-5-(N-methyl)formamidopyrimidine.. The enzyme catalyses 2'-deoxyribonucleotide-(2'-deoxyribose 5'-phosphate)-2'-deoxyribonucleotide-DNA = a 3'-end 2'-deoxyribonucleotide-(2,3-dehydro-2,3-deoxyribose 5'-phosphate)-DNA + a 5'-end 5'-phospho-2'-deoxyribonucleoside-DNA + H(+). In terms of biological role, involved in base excision repair of DNA damaged by oxidation or by mutagenic agents. Acts as a DNA glycosylase that recognizes and removes damaged bases. Has a preference for oxidized purines, such as 7,8-dihydro-8-oxoguanine (8-oxoG). Has AP (apurinic/apyrimidinic) lyase activity and introduces nicks in the DNA strand. Cleaves the DNA backbone by beta-delta elimination to generate a single-strand break at the site of the removed base with both 3'- and 5'-phosphates. The polypeptide is Formamidopyrimidine-DNA glycosylase (Alkalilimnicola ehrlichii (strain ATCC BAA-1101 / DSM 17681 / MLHE-1)).